Reading from the N-terminus, the 2116-residue chain is Myosin-2 heavy chain (2116 aa).

The Myosin N-terminal SH3-like domain occupies 30–82 (SDKRYIWYNPDPKERDSYECGEIVSETSDSFTFKTVDGQDRQVKKDDANQRNP). The region spanning 86 to 759 (DGVEDMSELS…QLARIEEARE (674 aa)) is the Myosin motor domain. K130 is modified (N6,N6-dimethyllysine). An ATP-binding site is contributed by 179–186 (GESGAGKT). Actin-binding regions lie at residues 638–660 (LASL…IPNN) and 738–752 (RFGI…GQLA). The 30-residue stretch at 762–791 (ISEIIKAIQAATRGWIARKVYKQAREHTVA) folds into the IQ domain. Positions 817–2116 (ARPLLKRRNF…MADFFGGFKA (1300 aa)) form a coiled coil. Disordered stretches follow at residues 1295–1314 (VNEQ…KRKV), 1363–1399 (DKSV…SKKK), 1415–1444 (TAKK…DAKN), 1711–1731 (VRDQ…SKRR), 1771–1791 (LEDE…LESE), and 1805–1844 (NRSR…AAKL). Basic and acidic residues-rich tracts occupy residues 1375 to 1399 (KNEE…SKKK), 1415 to 1443 (TAKK…DDAK), and 1722 to 1731 (RSELEDSKRR). The span at 1805–1832 (NRSRAEKDRKKYEKDLKDTKYKLNDEAA) shows a compositional bias: basic and acidic residues. 3 positions are modified to phosphothreonine; by MHCK: T1823, T1833, and T2029.

The protein belongs to the TRAFAC class myosin-kinesin ATPase superfamily. Myosin family. As to quaternary structure, myosin-2 heavy chain is two-headed. It self-assembles into filaments. Hexamer of 2 heavy chain subunits (MHC), 2 alkali light chain subunits (MLC) and 2 regulatory light chain subunits (MLC-2). Associates with elmoA. In terms of processing, phosphorylation inhibits thick filament formation and reduces the actin-activated ATPase activity.

The protein resides in the cytoplasm. It is found in the cell cortex. Myosin is a protein that binds to actin and has ATPase activity that is activated by actin. In Dictyostelium discoideum (Social amoeba), this protein is Myosin-2 heavy chain (mhcA).